The sequence spans 1104 residues: Carbamoyl phosphate synthase large chain (1104 aa).

The interval 1-403 (MPRRQDIQKI…SFQKALRSLE (403 aa)) is carboxyphosphate synthetic domain. ATP contacts are provided by arginine 129, arginine 170, glycine 176, glycine 177, glutamine 209, leucine 211, glutamate 216, glycine 242, isoleucine 243, histidine 244, glutamine 286, and glutamate 300. Residues 133–329 (NEAMDKIGVK…IAKMAAKLAV (197 aa)) enclose the ATP-grasp 1 domain. Residues glutamine 286, glutamate 300, and asparagine 302 each contribute to the Mg(2+) site. Mn(2+)-binding residues include glutamine 286, glutamate 300, and asparagine 302. An oligomerization domain region spans residues 404-552 (TGRAGWGCDK…YSTYEEETEV (149 aa)). A carbamoyl phosphate synthetic domain region spans residues 553-966 (IPASKPKVMI…AFAKAELGAG (414 aa)). In terms of domain architecture, ATP-grasp 2 spans 703 to 900 (EKILQKLNIS…LAKLASLIMS (198 aa)). ATP-binding residues include arginine 739, lysine 778, leucine 780, glutamate 785, glycine 811, isoleucine 812, histidine 813, serine 814, glutamine 854, and glutamate 871. Positions 854, 871, and 873 each coordinate Mg(2+). Mn(2+)-binding residues include glutamine 854, glutamate 871, and asparagine 873. The MGS-like domain occupies 967–1104 (ERLPLTGTVF…KTIQEYCPNF (138 aa)). The interval 967-1104 (ERLPLTGTVF…KTIQEYCPNF (138 aa)) is allosteric domain.

Belongs to the CarB family. Composed of two chains; the small (or glutamine) chain promotes the hydrolysis of glutamine to ammonia, which is used by the large (or ammonia) chain to synthesize carbamoyl phosphate. Tetramer of heterodimers (alpha,beta)4. Mg(2+) serves as cofactor. It depends on Mn(2+) as a cofactor.

The enzyme catalyses hydrogencarbonate + L-glutamine + 2 ATP + H2O = carbamoyl phosphate + L-glutamate + 2 ADP + phosphate + 2 H(+). It carries out the reaction hydrogencarbonate + NH4(+) + 2 ATP = carbamoyl phosphate + 2 ADP + phosphate + 2 H(+). The protein operates within amino-acid biosynthesis; L-arginine biosynthesis; carbamoyl phosphate from bicarbonate: step 1/1. It functions in the pathway pyrimidine metabolism; UMP biosynthesis via de novo pathway; (S)-dihydroorotate from bicarbonate: step 1/3. In terms of biological role, large subunit of the glutamine-dependent carbamoyl phosphate synthetase (CPSase). CPSase catalyzes the formation of carbamoyl phosphate from the ammonia moiety of glutamine, carbonate, and phosphate donated by ATP, constituting the first step of 2 biosynthetic pathways, one leading to arginine and/or urea and the other to pyrimidine nucleotides. The large subunit (synthetase) binds the substrates ammonia (free or transferred from glutamine from the small subunit), hydrogencarbonate and ATP and carries out an ATP-coupled ligase reaction, activating hydrogencarbonate by forming carboxy phosphate which reacts with ammonia to form carbamoyl phosphate. In Nostoc sp. (strain PCC 7120 / SAG 25.82 / UTEX 2576), this protein is Carbamoyl phosphate synthase large chain.